The following is a 360-amino-acid chain: DNA integrity scanning protein DisA (360 aa).

One can recognise a DAC domain in the interval 11 to 149; it reads ELDLSSILQF…ENMKYTLKDI (139 aa). ATP-binding positions include G78, L96, and 109-113; that span reads MRHRT.

Belongs to the DisA family. As to quaternary structure, homooligomer. Interacts with RadA. The cofactor is Mg(2+).

The protein localises to the cytoplasm. The catalysed reaction is 2 ATP = 3',3'-c-di-AMP + 2 diphosphate. Its activity is regulated as follows. Diadenylate cyclase (DAC) activity is inhibited 2-fold by Holliday junction (HJ) DNA, further addition of RecG inhibits DAC activity 11-fold; RecG may relocate DisA from the HJ. DAC is inhibited by the interaction with RadA. Diadenylate cyclase activity is not affected by ssDNA or dsDNA, but three- and four-way junctions strongly inhibit the activity of DisA, suggesting the enzyme is regulated by branched nucleic acids. Participates in a DNA-damage check-point that is active prior to asymmetric division when DNA is damaged. Forms globular foci that rapidly scan along the chromosomes during sporulation, searching for lesions. Its ability to scan through the chromosome rapidly is due to its non-specific DNA-binding. When a lesion is present, DisA pauses at the lesion site. This triggers a cellular response that culminates in a temporary block in sporulation initiation. It is required, at least partially, to inhibit the activity of the transcription factor spo0A, which controls, among others, early sporulation genes. In B.subtilis c-di-AMP is a second messenger that mediates growth, DNA repair and cell wall homeostasis; it is toxic when present in excess. Limits the replication fork reggression activity of RecG; DisA inhibits the ATPase activity of RecG. By limiting RecG-mediated fork regression, DisA provides time for removal of potentially lethal DNA lesions. Functionally, one of 3 paralogous diadenylate cyclases (DAC) in this bacteria. Has diadenylate cyclase activity, catalyzing the condensation of 2 ATP molecules into cyclic di-AMP (c-di-AMP). c-di-AMP acts as a signaling molecule that couples DNA integrity with progression of sporulation. The rise in c-di-AMP level generated by DisA while scanning the chromosome operates as a positive signal that advances sporulation; upon encountering a lesion, the DisA focus arrests at the damaged site and halts c-di-AMP synthesis. Does not convert GTP to c-di-GMP. The sequence is that of DNA integrity scanning protein DisA from Bacillus subtilis (strain 168).